The chain runs to 4388 residues: Intermembrane lipid transfer protein VPS13D (4388 aa).

Positions 2–115 (LEGLVAWVLN…ERERKKALLQ (114 aa)) constitute a Chorein N-terminal domain. Ser663 bears the Phosphoserine mark. The tract at residues 745–796 (QDNSRRKSRDGSASEETQFSDDEYKTPLATPPNTPPPESSSSNGEKTPPFSG) is disordered. Positions 747–756 (NSRRKSRDGS) are enriched in basic and acidic residues. Positions 773–782 (ATPPNTPPPE) are enriched in pro residues. A phosphoserine mark is found at Ser1034, Ser1038, Ser1042, Ser1138, and Ser1341. A disordered region spans residues 1563-1582 (ASATSSPCPDSPLPPLSTCG). Phosphoserine occurs at positions 1598, 1603, and 1699. 3 disordered regions span residues 1741 to 1771 (RPTS…VDEP), 2070 to 2108 (QDKE…QFTM), and 2122 to 2145 (FVPS…ESSS). Thr1761 is subject to Phosphothreonine. Ser1765 carries the phosphoserine modification. Residues 2123 to 2144 (VPSTSTKQQGPQPTLSVGQESS) are compositionally biased toward polar residues. Residues Ser2435, Ser2671, Ser2861, Ser2864, and Ser2983 each carry the phosphoserine modification. In terms of domain architecture, UBA spans 2633–2676 (TLDPVLELQLARLQELGFSMDDCRKALLACQGQLKKAASWLFKN). The 283-residue stretch at 3276–3558 (LKIFISAPYW…LDYAWDEPTL (283 aa)) folds into the SHR-BD domain. An N6-acetyllysine modification is found at Lys3524.

This sequence belongs to the VPS13 family. Widely expressed.

In terms of biological role, mediates the transfer of lipids between membranes at organelle contact sites. Functions in promoting mitochondrial clearance by mitochondrial autophagy (mitophagy), also possibly by positively regulating mitochondrial fission. Mitophagy plays an important role in regulating cell health and mitochondrial size and homeostasis. In Homo sapiens (Human), this protein is Intermembrane lipid transfer protein VPS13D.